Consider the following 199-residue polypeptide: Recombination protein RecR (199 aa).

The segment at 57–72 adopts a C4-type zinc-finger fold; that stretch reads CQSCRTFTEQSLCPIC. Residues 81 to 176 enclose the Toprim domain; the sequence is GVICVVETPA…IISRIAHGVP (96 aa).

The protein belongs to the RecR family.

In terms of biological role, may play a role in DNA repair. It seems to be involved in an RecBC-independent recombinational process of DNA repair. It may act with RecF and RecO. In Shewanella denitrificans (strain OS217 / ATCC BAA-1090 / DSM 15013), this protein is Recombination protein RecR.